The chain runs to 132 residues: Small ribosomal subunit protein uS8 (132 aa).

This sequence belongs to the universal ribosomal protein uS8 family. Part of the 30S ribosomal subunit. Contacts proteins S5 and S12.

One of the primary rRNA binding proteins, it binds directly to 16S rRNA central domain where it helps coordinate assembly of the platform of the 30S subunit. In Lactobacillus acidophilus (strain ATCC 700396 / NCK56 / N2 / NCFM), this protein is Small ribosomal subunit protein uS8.